A 475-amino-acid polypeptide reads, in one-letter code: UDP-N-acetylmuramate--L-alanine ligase (475 aa).

An ATP-binding site is contributed by 125-131 (GTHGKTT).

Belongs to the MurCDEF family.

The protein localises to the cytoplasm. The enzyme catalyses UDP-N-acetyl-alpha-D-muramate + L-alanine + ATP = UDP-N-acetyl-alpha-D-muramoyl-L-alanine + ADP + phosphate + H(+). It functions in the pathway cell wall biogenesis; peptidoglycan biosynthesis. In terms of biological role, cell wall formation. The protein is UDP-N-acetylmuramate--L-alanine ligase of Glaesserella parasuis serovar 5 (strain SH0165) (Haemophilus parasuis).